A 301-amino-acid chain; its full sequence is Phosphatidylserine decarboxylase proenzyme (301 aa).

Residues D115, H171, and S258 each act as charge relay system; for autoendoproteolytic cleavage activity in the active site. Residue S258 is the Schiff-base intermediate with substrate; via pyruvic acid; for decarboxylase activity of the active site. Residue S258 is modified to Pyruvic acid (Ser); by autocatalysis.

This sequence belongs to the phosphatidylserine decarboxylase family. PSD-B subfamily. Prokaryotic type II sub-subfamily. Heterodimer of a large membrane-associated beta subunit and a small pyruvoyl-containing alpha subunit. Requires pyruvate as cofactor. Is synthesized initially as an inactive proenzyme. Formation of the active enzyme involves a self-maturation process in which the active site pyruvoyl group is generated from an internal serine residue via an autocatalytic post-translational modification. Two non-identical subunits are generated from the proenzyme in this reaction, and the pyruvate is formed at the N-terminus of the alpha chain, which is derived from the carboxyl end of the proenzyme. The autoendoproteolytic cleavage occurs by a canonical serine protease mechanism, in which the side chain hydroxyl group of the serine supplies its oxygen atom to form the C-terminus of the beta chain, while the remainder of the serine residue undergoes an oxidative deamination to produce ammonia and the pyruvoyl prosthetic group on the alpha chain. During this reaction, the Ser that is part of the protease active site of the proenzyme becomes the pyruvoyl prosthetic group, which constitutes an essential element of the active site of the mature decarboxylase.

Its subcellular location is the cell membrane. It catalyses the reaction a 1,2-diacyl-sn-glycero-3-phospho-L-serine + H(+) = a 1,2-diacyl-sn-glycero-3-phosphoethanolamine + CO2. The protein operates within phospholipid metabolism; phosphatidylethanolamine biosynthesis; phosphatidylethanolamine from CDP-diacylglycerol: step 2/2. Its function is as follows. Catalyzes the formation of phosphatidylethanolamine (PtdEtn) from phosphatidylserine (PtdSer). The protein is Phosphatidylserine decarboxylase proenzyme of Chlamydia pneumoniae (Chlamydophila pneumoniae).